We begin with the raw amino-acid sequence, 841 residues long: MFASVLKKIVGTKNDRELKKYSLIQREINALESSIAALSDEQLKEKTPYFKEKLHTGASLDDILPEAFAVVREVARRTVNMRPFDVQLIGGMVLHEGKIAEMKTGEGKTLVATMPMYLNALEGKGAHLVTVNDYLASRDAEWMSPIYSFLGLSVGVIVHGMDDDERRAAYACDITYGTNNEFGFDYLRDNMKYSLEDYTQREFNYSIVDEVDSILIDEARTPLIISGPSEESTDKYYRINQIIPRLKKERDYTIDEKSRTVVLTEEGVARVESYLNVSNLYEPRNIDTLHHVNQALKAHTLFKRDVDYLVKDGQVIIVDEFTGRIMPGRRYSDGLHQALEAKEKVKIEQENQTLASITFQNFFRMYSKLAGMTGTADTEAAEFKKIYNLDVVVVPTNMPMIRVDHTDVIYKTEKEKFSAVIEEIKELHKAKRPVLVGTISIEKSELLSKYLTQTGIQHHVLNAKNHEKEAEIVSQAGQPGQVTISTNMAGRGTDIKLGERVAELGGLHILGTERHESRRIDNQLRGRSGRQGDMGSSRFYLSLEDDLLRIFGAEKISSIMDKIGIEENQPIEHKLISRAIENAQKRVEGQNFDIRKHLLEYDDVMNRQRQVIYEQRRNVLKGDELREDLLDMIEEVVEDFVPEYVDEKRHPDEWNLKGLEDRVLKQFSLRLDFSKSGDVGSLEDIQEKIVAAVNDLLNRKEAEFGKPLMDYLIRMISIQSIDSHWKDHLLAMDHLKEGIGLRGYGQKDPVREYQKEGYDLFMDMIRRIKEDTLEKLCMVQIRREEEVEEMREQSRQNYIMNRGEDIAAPATVRRKNEKVGRNDPCPCGSGKKYKKCCGANK.

ATP contacts are provided by residues Q87, 105 to 109, and D494; that span reads GEGKT. Zn(2+)-binding residues include C825, C827, C836, and C837.

The protein belongs to the SecA family. As to quaternary structure, monomer and homodimer. Part of the essential Sec protein translocation apparatus which comprises SecA, SecYEG and auxiliary proteins SecDF-YajC and YidC. Zn(2+) serves as cofactor.

The protein localises to the cell inner membrane. Its subcellular location is the cytoplasm. The catalysed reaction is ATP + H2O + cellular proteinSide 1 = ADP + phosphate + cellular proteinSide 2.. Functionally, part of the Sec protein translocase complex. Interacts with the SecYEG preprotein conducting channel. Has a central role in coupling the hydrolysis of ATP to the transfer of proteins into and across the cell membrane, serving as an ATP-driven molecular motor driving the stepwise translocation of polypeptide chains across the membrane. This Syntrophus aciditrophicus (strain SB) protein is Protein translocase subunit SecA.